Reading from the N-terminus, the 1240-residue chain is Neurofascin (1240 aa).

An N-terminal signal peptide occupies residues 1–24 (MARQQAPPWVHIALILFLLSLGGA). At 25–1110 (IEIPMDPSIQ…NQADIATQGW (1086 aa)) the chain is on the extracellular side. 6 consecutive Ig-like C2-type domains span residues 41–137 (PTIT…LQVS), 143–230 (PKEN…NPFT), 244–332 (PSFM…ISVR), 337–424 (PYWL…AFVS), 430–517 (PRML…VRLE), and 521–603 (PTRI…QDLA). 4 cysteine pairs are disulfide-bonded: Cys-63–Cys-118, Cys-162–Cys-213, Cys-268–Cys-316, and Cys-358–Cys-408. Asn-305 carries an N-linked (GlcNAc...) asparagine glycan. 2 N-linked (GlcNAc...) asparagine glycosylation sites follow: Asn-409 and Asn-446. 2 disulfide bridges follow: Cys-452–Cys-501 and Cys-543–Cys-592. Tyr-481 carries the phosphotyrosine modification. Asn-483 carries N-linked (GlcNAc...) asparagine glycosylation. Position 485 is a phosphoserine (Ser-485). Fibronectin type-III domains lie at 630–725 (RPRD…TSGA), 727–823 (PESN…SGED), 827–923 (APRR…PNEA), and 1007–1099 (APDE…TAYT). The segment at 710–740 (SSHPSLPSERYRTSGAPPESNPSDVKGEGTR) is disordered. 4 N-linked (GlcNAc...) asparagine glycosylation sites follow: Asn-752, Asn-778, Asn-866, and Asn-881. The disordered stretch occupies residues 902 to 942 (ARTQVGSGEAATEESPAPPNEATPTAAPPTLPPTTVGTTGL). Residues 907 to 916 (GSGEAATEES) are compositionally biased toward low complexity. Over residues 917 to 933 (PAPPNEATPTAAPPTLP) the composition is skewed to pro residues. Residues 1111–1131 (FIGLMCAIALLVLILLIVCFI) traverse the membrane as a helical segment. Residues 1132–1240 (KRSRGGKYPV…SPVNAIYSLA (109 aa)) lie on the Cytoplasmic side of the membrane. Residues 1141-1240 (VREKKDVPLG…SPVNAIYSLA (100 aa)) are disordered. Residues 1154–1165 (PKEEDGSFDYSD) show a composition bias toward acidic residues. A phosphoserine mark is found at Ser-1160, Ser-1174, Ser-1187, Ser-1190, Ser-1226, Ser-1227, and Ser-1231. Residues 1171 to 1184 (LQGSQTSLDGTIKQ) show a composition bias toward polar residues.

Belongs to the immunoglobulin superfamily. L1/neurofascin/NgCAM family. In terms of assembly, horseshoe-shaped homodimer. Probable constituent of a NFASC/NRCAM/ankyrin-G complex. Associates with the sodium channel beta-1 (SCN1B) and beta-3 (SCN3B) subunits. Interacts with GLDN/gliomedin. Interacts with MYOC.

It localises to the cell membrane. Cell adhesion, ankyrin-binding protein which may be involved in neurite extension, axonal guidance, synaptogenesis, myelination and neuron-glial cell interactions. This is Neurofascin (Nfasc) from Mus musculus (Mouse).